Here is a 132-residue protein sequence, read N- to C-terminus: Small ribosomal subunit protein uS11 (132 aa).

The tract at residues 108–132 (GRIEDVTPVPHDSCRPKGGRRGRRV) is disordered.

Belongs to the universal ribosomal protein uS11 family. As to quaternary structure, part of the 30S ribosomal subunit.

In terms of biological role, located on the platform of the 30S subunit. The sequence is that of Small ribosomal subunit protein uS11 from Methanoregula boonei (strain DSM 21154 / JCM 14090 / 6A8).